A 327-amino-acid chain; its full sequence is 2-keto-3-deoxygluconate permease (327 aa).

Helical transmembrane passes span Ile-10–Pro-30, Gly-42–Ile-62, Lys-73–Ser-93, Ile-95–Val-115, Ala-139–Gly-159, Ile-163–Ala-183, Val-199–Ile-219, Leu-224–Ala-244, Thr-254–Ala-274, and Ser-289–Trp-309.

Belongs to the KdgT transporter family.

It is found in the cell inner membrane. The enzyme catalyses 2-dehydro-3-deoxy-D-gluconate(in) + H(+)(in) = 2-dehydro-3-deoxy-D-gluconate(out) + H(+)(out). Catalyzes the proton-dependent uptake of 2-keto-3-deoxygluconate (KDG) into the cell. The sequence is that of 2-keto-3-deoxygluconate permease from Escherichia coli O7:K1 (strain IAI39 / ExPEC).